Consider the following 890-residue polypeptide: Kinesin-like protein KIF20A (890 aa).

At Ser-2 the chain carries N-acetylserine. Phosphoserine occurs at positions 7, 14, and 21. The 444-residue stretch at 64-507 (KVKVYLRVRP…AKFSAIASQL (444 aa)) folds into the Kinesin motor domain. Residue 160–167 (GVTNSGKT) participates in ATP binding. Ser-528 is subject to Phosphoserine; by PLK1. A phosphoserine mark is found at Ser-532, Ser-662, Ser-668, Ser-685, and Ser-825. The stretch at 611 to 762 (LDTQKELLEE…ESLQSAERAC (152 aa)) forms a coiled coil. Positions 763-890 (CHSTGAGKLR…LKSGPFGKKY (128 aa)) are globular. The segment at 832–865 (TNQENQQPNQQPPGKKPFLRNLLPRTPTCQSSTD) is disordered. Thr-857 carries the phosphothreonine modification. Residues Ser-867, Ser-878, and Ser-883 each carry the phosphoserine modification.

Belongs to the TRAFAC class myosin-kinesin ATPase superfamily. Kinesin family. In terms of processing, phosphorylated by PLK1 at Ser-528 during mitosis, creating a docking site for PLK1 and recruiting PLK1 at central spindle.

It is found in the golgi apparatus. The protein resides in the cytoplasm. The protein localises to the cytoskeleton. Its subcellular location is the spindle. Mitotic kinesin required for chromosome passenger complex (CPC)-mediated cytokinesis. Following phosphorylation by PLK1, involved in recruitment of PLK1 to the central spindle. Interacts with guanosine triphosphate (GTP)-bound forms of RAB6A and RAB6B. May act as a motor required for the retrograde RAB6 regulated transport of Golgi membranes and associated vesicles along microtubules. Has a microtubule plus end-directed motility. This is Kinesin-like protein KIF20A (KIF20A) from Homo sapiens (Human).